Consider the following 303-residue polypeptide: Putative HTH-type transcriptional regulatory protein Mpal_0031 (303 aa).

Residues 132 to 189 enclose the HTH cro/C1-type domain; that stretch reads LRGLREQRNMSLGDLGAVLGVSRRTISKYESGMGTTLEIAIKIEEVFDSGVIESIDLL. Positions 143-162 form a DNA-binding region, H-T-H motif; that stretch reads LGDLGAVLGVSRRTISKYES.

In Methanosphaerula palustris (strain ATCC BAA-1556 / DSM 19958 / E1-9c), this protein is Putative HTH-type transcriptional regulatory protein Mpal_0031.